The following is a 131-amino-acid chain: Interleukin-13 (131 aa).

Residues 1 to 18 (MALWLTVVIALTCLGGLA) form the signal peptide. Asn38, Asn48, Asn56, and Asn71 each carry an N-linked (GlcNAc...) asparagine glycan. Disulfide bonds link Cys47-Cys75 and Cys63-Cys89.

Belongs to the IL-4/IL-13 family. Interacts with IL13RA2.

The protein resides in the secreted. Functionally, cytokine that plays important roles in allergic inflammation and immune response to parasite infection. Synergizes with IL2 in regulating interferon-gamma synthesis. Stimulates B-cell proliferation, and activation of eosinophils, basophils, and mast cells. Plays an important role in controlling IL33 activity by modulating the production of transmembrane and soluble forms of interleukin-1 receptor-like 1/IL1RL1. Displays the capacity to antagonize Th1-driven proinflammatory immune response and downregulates synthesis of many proinflammatory cytokines including IL1, IL6, IL10, IL12 and TNF-alpha through a mechanism that partially involves suppression of NF-kappa-B. Also functions on nonhematopoietic cells, including endothelial cells where it induces vascular cell adhesion protein 1/VCAM1, which is important in the recruitment of eosinophils. Exerts its biological effects through its receptors which comprises the IL4R chain and the IL13RA1 chain, to activate JAK1 and TYK2, leading to the activation of STAT6. Aside from IL13RA1, another receptor IL13RA2 acts as a high affinity decoy for IL13 and mediates internalization and depletion of extracellular IL13. The chain is Interleukin-13 (IL13) from Canis lupus familiaris (Dog).